The primary structure comprises 134 residues: Small ribosomal subunit protein uS17c (134 aa).

A chloroplast-targeting transit peptide spans 1–37; the sequence is HHFFTGNGIGLNRFSNPISSPQTQTQTRSLPFPAIKA. The segment at 106–134 is disordered; it reads FLAVPAPSRKSKKAGSSGELGIPLQSQQE.

It belongs to the universal ribosomal protein uS17 family. Part of the 30S ribosomal subunit.

The protein localises to the plastid. It localises to the chloroplast. One of the primary rRNA binding proteins, it binds specifically to the 5'-end of 16S ribosomal RNA. In Pisum sativum (Garden pea), this protein is Small ribosomal subunit protein uS17c (RPS17).